Reading from the N-terminus, the 82-residue chain is Apovitellenin-1 (82 aa).

The protein belongs to the apovitellenin family. Monomer. As to expression, found in egg yolk and in plasma.

Protein component of the very low density lipoprotein (VLDL) of egg-laying females. Potent lipoprotein lipase inhibitor, preventing the loss of triglycerides from VLDL on their way from the liver to the growing oocytes. This Meleagris gallopavo (Wild turkey) protein is Apovitellenin-1.